The chain runs to 292 residues: Oxidative stress-responsive serine-rich protein 1 (292 aa).

Residues 27-175 (SIASLSVGEG…SSDATQVSQA (149 aa)) are disordered. The segment covering 65–83 (STRKSSRGVVRTQRRRRSK) has biased composition (basic residues). Residues Thr143 and Thr233 each carry the phosphothreonine modification.

This Pongo abelii (Sumatran orangutan) protein is Oxidative stress-responsive serine-rich protein 1 (OSER1).